A 635-amino-acid chain; its full sequence is Probable extracellular metalloproteinase 1 (635 aa).

The N-terminal stretch at 1–19 is a signal peptide; that stretch reads MHGLLLAAGLLSLPLHVLA. Positions 20-246 are excised as a propeptide; it reads HPQPSTSTSL…VHNVVDYVAH (227 aa). An N-linked (GlcNAc...) asparagine glycan is attached at Asn287. His430 is a binding site for Zn(2+). Glu431 is a catalytic residue. His434 is a Zn(2+) binding site. 3 N-linked (GlcNAc...) asparagine glycosylation sites follow: Asn475, Asn594, and Asn623.

Belongs to the peptidase M36 family. Requires Zn(2+) as cofactor.

The protein resides in the secreted. In terms of biological role, secreted metalloproteinase probably acting as a virulence factor. The sequence is that of Probable extracellular metalloproteinase 1 (MEP1) from Arthroderma benhamiae (strain ATCC MYA-4681 / CBS 112371) (Trichophyton mentagrophytes).